The following is a 319-amino-acid chain: BTB/POZ domain-containing adapter for CUL3-mediated RhoA degradation protein 2 (319 aa).

Residues 31-99 (KYIRLNVGGC…LRDDTITLPK (69 aa)) form the BTB domain.

The protein belongs to the BACURD family. Component of the BCR(TNFAIP1) E3 ubiquitin ligase complex, at least composed of cul3, tnfaip1/bacurd2 and rbx1.

It localises to the cytoplasm. The protein resides in the nucleus. The protein localises to the endosome. The protein operates within protein modification; protein ubiquitination. Substrate-specific adapter of a BCR (BTB-CUL3-RBX1) E3 ubiquitin-protein ligase complex involved in regulation of cytoskeleton structure. The BCR(TNFAIP1) E3 ubiquitin ligase complex mediates the ubiquitination of target proteins, leading to their degradation by the proteasome. The sequence is that of BTB/POZ domain-containing adapter for CUL3-mediated RhoA degradation protein 2 (tnfaip1) from Xenopus tropicalis (Western clawed frog).